The sequence spans 311 residues: Olfactory receptor 52J3 (311 aa).

Residues 1-27 (MFYHNKSIFHPVTFFLIGIPGLEDFHM) are Extracellular-facing. An N-linked (GlcNAc...) asparagine glycan is attached at asparagine 5. A helical membrane pass occupies residues 28-48 (WISGPFCSVYLVALLGNATIL). The Cytoplasmic segment spans residues 49 to 56 (LVIKVEQT). The chain crosses the membrane as a helical span at residues 57-77 (LREPMFYFLAILSTIDLALST). Residues 78 to 101 (TSVPRMLGIFWFDAHEINYGACVA) are Extracellular-facing. A disulfide bridge links cysteine 99 with cysteine 191. A helical transmembrane segment spans residues 102–122 (QMFLIHAFTGMEAEVLLAMAF). Over 123-141 (DRYVAVCAPLHYATILTSQ) the chain is Cytoplasmic. A helical transmembrane segment spans residues 142-162 (VLVGISMCIVIRPVLLTLPMV). Residues 163-198 (YLIYRLPFCQAHIIAHSYCEHMGIAKLSCGNIRING) lie on the Extracellular side of the membrane. A helical transmembrane segment spans residues 199 to 218 (IYGLFVVSFFVLNLVLIGIS). Residues 219-238 (YVYILRAVFRLPSHDAQLKA) lie on the Cytoplasmic side of the membrane. Residues 239–259 (LSTCGAHVGVICVFYIPSVFS) form a helical membrane-spanning segment. Over 260-274 (FLTHRFGHQIPGYIH) the chain is Extracellular. Residues 275 to 295 (ILVANLYLIIPPSLNPIIYGV) form a helical membrane-spanning segment. At 296 to 311 (RTKQIRERVLYVFTKK) the chain is on the cytoplasmic side.

Belongs to the G-protein coupled receptor 1 family.

It localises to the cell membrane. Its function is as follows. Odorant receptor. This Homo sapiens (Human) protein is Olfactory receptor 52J3 (OR52J3).